Here is a 529-residue protein sequence, read N- to C-terminus: Nucleolar protein 58 (529 aa).

Thr-34 carries the post-translational modification Phosphothreonine. A Phosphoserine modification is found at Ser-109. Residues 155–400 (ADKVDTMIVQ…LEARLRTLED (246 aa)) form a sufficient for interaction with NOPCHAP1 region. A Glycyl lysine isopeptide (Lys-Gly) (interchain with G-Cter in SUMO2) cross-link involves residue Lys-157. A Nop domain is found at 282-400 (IAPNVTVMVG…LEARLRTLED (119 aa)). 2 positions are modified to phosphoserine: Ser-304 and Ser-351. Residues Lys-353, Lys-411, Lys-415, Lys-422, Lys-426, Lys-441, Lys-444, and Lys-465 each participate in a glycyl lysine isopeptide (Lys-Gly) (interchain with G-Cter in SUMO2) cross-link. Positions 409–529 (TGKALAKTEK…KKKKKRENED (121 aa)) are disordered. Basic and acidic residues predominate over residues 414–427 (AKTEKYEHKSEVKT). Lys-467 participates in a covalent cross-link: Glycyl lysine isopeptide (Lys-Gly) (interchain with G-Cter in SUMO); alternate. Residue Lys-467 forms a Glycyl lysine isopeptide (Lys-Gly) (interchain with G-Cter in SUMO1); alternate linkage. Lys-467 is covalently cross-linked (Glycyl lysine isopeptide (Lys-Gly) (interchain with G-Cter in SUMO2); alternate). Positions 469–481 (EEEEEEKVAEEEE) are enriched in acidic residues. Phosphoserine is present on Ser-483. Lys-485 is covalently cross-linked (Glycyl lysine isopeptide (Lys-Gly) (interchain with G-Cter in SUMO2)). Basic residues predominate over residues 485–495 (KKKKKRGKKKH). Lys-497 is covalently cross-linked (Glycyl lysine isopeptide (Lys-Gly) (interchain with G-Cter in SUMO); alternate). A Glycyl lysine isopeptide (Lys-Gly) (interchain with G-Cter in SUMO2); alternate cross-link involves residue Lys-497. Phosphoserine occurs at positions 502 and 514. Positions 517–529 (KKKKKKKKRENED) are enriched in basic residues.

It belongs to the NOP5/NOP56 family. As to quaternary structure, core component of box C/D small nucleolar ribonucleoprotein (snoRNP) particles; the core proteins SNU13, NOP56, NOP58 and FBL or FBLL1 assemble stepwise onto the snoRNA. Interacts with NOLC1/Nopp140. Interacts with NOPCHAP1, NUFIP1, RUVBL1 and RUVBL2; NOPCHAP1 bridges the association of NOP58 with RUVBL1:RUVBL2 and NUFIP1. Interacts with PIH1D1. Part of the small subunit (SSU) processome, composed of more than 70 proteins and the RNA chaperone small nucleolar RNA (snoRNA) U3. In terms of processing, sumoylation is essential for high-affinity binding to snoRNAs. In terms of tissue distribution, ubiquitous.

Its subcellular location is the nucleus. It is found in the nucleolus. It localises to the nucleoplasm. Required for the biogenesis of box C/D snoRNAs such as U3, U8 and U14 snoRNAs. Part of the small subunit (SSU) processome, first precursor of the small eukaryotic ribosomal subunit. During the assembly of the SSU processome in the nucleolus, many ribosome biogenesis factors, an RNA chaperone and ribosomal proteins associate with the nascent pre-rRNA and work in concert to generate RNA folding, modifications, rearrangements and cleavage as well as targeted degradation of pre-ribosomal RNA by the RNA exosome. Core component of box C/D small nucleolar ribonucleoprotein (snoRNP) complexes that function in methylation of multiple sites on ribosomal RNAs (rRNAs) and messenger RNAs (mRNAs). This is Nucleolar protein 58 from Homo sapiens (Human).